The primary structure comprises 378 residues: Mannitol-1-phosphate 5-dehydrogenase (378 aa).

4–15 is an NAD(+) binding site; that stretch reads SVHFGAGNIGRG.

This sequence belongs to the mannitol dehydrogenase family.

It catalyses the reaction D-mannitol 1-phosphate + NAD(+) = beta-D-fructose 6-phosphate + NADH + H(+). The chain is Mannitol-1-phosphate 5-dehydrogenase from Streptococcus pneumoniae serotype 4 (strain ATCC BAA-334 / TIGR4).